The chain runs to 490 residues: MAHFPDTSGMTGVLRPLRIEGDILDLEVEGEIPAQLDGTFHRVHPDAQFPPRFEDDQFFNGDGMVSLFRFHDGKIDFRQRYAQTDKWKVERKAGKSLFGAYRNPLTDDASVQGMIRGTANTNVMVHAGKLYAMKEDSPCLIMDPLTLETEGYTNFDGKLKNQTFSAHAKIDPVTGNFCNFGYAATGLLTTDCSYFEIDPAGNLLFETEFQVPYYCMMHDYGLTEHYAIFHIVPCSPNWDRLKAGLPHFGFDTTLPVWLGVVPRGPGVTNKDVRWFKAPKTIFASHVMNAFEEGSKIHFDTPQAENNAFPFFPDIHGAPFDPVAARPYLHRWTVDLGSNSEDFAEVRQLTSWIDEFPRVDARYVGQPYRHGWGLVMDPEMEMEFARGRASGFKMNRIGHWDHATGKEDSWWCGPQSIIQEPCFVPRMADSAEGDGYIIALVDNLITNYSDLVVLDALNLKDGPIGRAKLPIRLRSGLHGNWADASKLPIAA.

Residues His167, His218, His285, and His477 each coordinate Fe cation.

This sequence belongs to the carotenoid oxygenase family. As to quaternary structure, homodimer of two beta subunits. Fe(2+) is required as a cofactor.

It catalyses the reaction 1,2-bis(4-hydroxy-3-methoxyphenyl)ethylene + O2 = 2 vanillin. Its activity is regulated as follows. Activity is high with beta-5 type stilbene and minimal with beta-1 type stilbene. A 4-hydroxyl group and trans-stilbene structure is essential for the binding of substrates to the enzyme. In terms of biological role, catalyzes the cleavage of the interphenyl double bond (C alpha-C beta) of lignin-derived polyphenolic diaryl-propane type compounds (Stilbene). In Sphingomonas paucimobilis (Pseudomonas paucimobilis), this protein is Lignostilbene-alpha,beta-dioxygenase isozyme III.